The chain runs to 603 residues: uncharacterized protein (603 aa).

The PE domain maps to Met-1–Ala-93.

This sequence belongs to the mycobacterial PE family. PGRS subfamily.

This is an uncharacterized protein from Mycobacterium tuberculosis (strain ATCC 25618 / H37Rv).